The sequence spans 235 residues: Phosphoribosylaminoimidazole-succinocarboxamide synthase (235 aa).

Belongs to the SAICAR synthetase family.

The catalysed reaction is 5-amino-1-(5-phospho-D-ribosyl)imidazole-4-carboxylate + L-aspartate + ATP = (2S)-2-[5-amino-1-(5-phospho-beta-D-ribosyl)imidazole-4-carboxamido]succinate + ADP + phosphate + 2 H(+). It participates in purine metabolism; IMP biosynthesis via de novo pathway; 5-amino-1-(5-phospho-D-ribosyl)imidazole-4-carboxamide from 5-amino-1-(5-phospho-D-ribosyl)imidazole-4-carboxylate: step 1/2. The protein is Phosphoribosylaminoimidazole-succinocarboxamide synthase of Streptococcus pneumoniae serotype 19F (strain G54).